Reading from the N-terminus, the 1028-residue chain is Contactin-3 (1028 aa).

Positions M1–G19 are cleaved as a signal peptide. Ig-like C2-type domains lie at P26 to Q117, E122 to L208, P227 to T313, P318 to K402, P408 to T497, and P499 to I593. Cystine bridges form between C50-C100, C144-C196, C249-C297, C339-C386, and C431-C479. 2 N-linked (GlcNAc...) asparagine glycosylation sites follow: N65 and N193. N377, N468, N489, and N538 each carry an N-linked (GlcNAc...) asparagine glycan. C521 and C577 are joined by a disulfide. 4 consecutive Fibronectin type-III domains span residues P600–A698, A703–E800, A805–T901, and P902–D998. The interval G684–R714 is disordered. 6 N-linked (GlcNAc...) asparagine glycosylation sites follow: N765, N860, N895, N913, N931, and N956. S1002 is lipidated: GPI-anchor amidated serine. The propeptide at T1003–W1028 is removed in mature form.

The protein belongs to the immunoglobulin superfamily. Contactin family. In terms of assembly, interacts with PTPRG. As to expression, specifically expressed in brain. Not expressed in peripheral tissues such as heart, lung, liver, spleen, kidney and skeletal muscle. In brain, it is restricted to subsets of neurons such as Purkinje cells of the cerebellum, granule cells of the dentate gyrus, and neurons in the superficial layers of the cerebral cortex.

It localises to the cell membrane. In terms of biological role, contactins mediate cell surface interactions during nervous system development. Has some neurite outgrowth-promoting activity. This is Contactin-3 (Cntn3) from Rattus norvegicus (Rat).